Here is a 44-residue protein sequence, read N- to C-terminus: Poly-ADP-ribosylation-amplifying and CtIP-maintaining micropeptide (44 aa).

A disordered region spans residues 1–44; that stretch reads MAASGGTKKAQSGGRRLREPSSRPSRRARQRPRRGALRKAGRFL. Basic residues predominate over residues 24–44; it reads PSRRARQRPRRGALRKAGRFL.

As to quaternary structure, interacts with KLHL15; preventing ubiquitination and degradation of RBBP8/CtIP. Interacts with PARP1.

It is found in the nucleus. It localises to the nucleolus. The protein localises to the chromosome. In terms of biological role, micropeptide that acts as a regulator of DNA repair both by preventing KLHL15-mediated ubiquitination and degradation of RBBP8/CtIP, and by promoting the poly-ADP-ribosyltransferase activity of PARP1. Prevents KLHL15-mediated ubiquitination of RBBP8/CtIP by competitively blocking the association between KLHL15 and RBBP8/CtIP. Recruited to DNA damage sites via association with poly-ADP-ribose chains, and enhances the poly-ADP-ribosyltransferase activity of PARP1. In Homo sapiens (Human), this protein is Poly-ADP-ribosylation-amplifying and CtIP-maintaining micropeptide.